Consider the following 223-residue polypeptide: Endonuclease NucS (223 aa).

It belongs to the NucS endonuclease family.

It is found in the cytoplasm. In terms of biological role, cleaves both 3' and 5' ssDNA extremities of branched DNA structures. The chain is Endonuclease NucS from Streptomyces griseus subsp. griseus (strain JCM 4626 / CBS 651.72 / NBRC 13350 / KCC S-0626 / ISP 5235).